Reading from the N-terminus, the 219-residue chain is Small ribosomal subunit protein uS3 (219 aa).

The KH type-2 domain maps to 39–108 (IKEFIKKNYF…KVTVKVQEIK (70 aa)).

This sequence belongs to the universal ribosomal protein uS3 family. In terms of assembly, part of the 30S ribosomal subunit. Forms a tight complex with proteins S10 and S14.

In terms of biological role, binds the lower part of the 30S subunit head. Binds mRNA in the 70S ribosome, positioning it for translation. This chain is Small ribosomal subunit protein uS3, found in Fusobacterium nucleatum subsp. nucleatum (strain ATCC 25586 / DSM 15643 / BCRC 10681 / CIP 101130 / JCM 8532 / KCTC 2640 / LMG 13131 / VPI 4355).